The chain runs to 182 residues: ATP synthase subunit delta (182 aa).

It belongs to the ATPase delta chain family. F-type ATPases have 2 components, F(1) - the catalytic core - and F(0) - the membrane proton channel. F(1) has five subunits: alpha(3), beta(3), gamma(1), delta(1), epsilon(1). F(0) has three main subunits: a(1), b(2) and c(10-14). The alpha and beta chains form an alternating ring which encloses part of the gamma chain. F(1) is attached to F(0) by a central stalk formed by the gamma and epsilon chains, while a peripheral stalk is formed by the delta and b chains.

Its subcellular location is the cell membrane. Its function is as follows. F(1)F(0) ATP synthase produces ATP from ADP in the presence of a proton or sodium gradient. F-type ATPases consist of two structural domains, F(1) containing the extramembraneous catalytic core and F(0) containing the membrane proton channel, linked together by a central stalk and a peripheral stalk. During catalysis, ATP synthesis in the catalytic domain of F(1) is coupled via a rotary mechanism of the central stalk subunits to proton translocation. This protein is part of the stalk that links CF(0) to CF(1). It either transmits conformational changes from CF(0) to CF(1) or is implicated in proton conduction. This chain is ATP synthase subunit delta, found in Desulforudis audaxviator (strain MP104C).